The chain runs to 48 residues: DNA-directed RNA polymerase subunit Rpo12 (48 aa).

Residues cysteine 6, cysteine 9, cysteine 26, and cysteine 29 each coordinate Zn(2+).

It belongs to the archaeal Rpo12/eukaryotic RPC10 RNA polymerase subunit family. Part of the 13-subunit RNA polymerase. Zn(2+) serves as cofactor.

The protein resides in the cytoplasm. It catalyses the reaction RNA(n) + a ribonucleoside 5'-triphosphate = RNA(n+1) + diphosphate. In terms of biological role, DNA-dependent RNA polymerase (RNAP) catalyzes the transcription of DNA into RNA using the four ribonucleoside triphosphates as substrates. This is DNA-directed RNA polymerase subunit Rpo12 from Sulfolobus acidocaldarius (strain ATCC 33909 / DSM 639 / JCM 8929 / NBRC 15157 / NCIMB 11770).